The following is a 418-amino-acid chain: Serine hydroxymethyltransferase (418 aa).

Residues L121 and 125–127 (GHL) each bind (6S)-5,6,7,8-tetrahydrofolate. Residue K230 is modified to N6-(pyridoxal phosphate)lysine. A (6S)-5,6,7,8-tetrahydrofolate-binding site is contributed by 356–358 (SPF).

It belongs to the SHMT family. Homodimer. Requires pyridoxal 5'-phosphate as cofactor.

It localises to the cytoplasm. It carries out the reaction (6R)-5,10-methylene-5,6,7,8-tetrahydrofolate + glycine + H2O = (6S)-5,6,7,8-tetrahydrofolate + L-serine. It functions in the pathway one-carbon metabolism; tetrahydrofolate interconversion. The protein operates within amino-acid biosynthesis; glycine biosynthesis; glycine from L-serine: step 1/1. Its function is as follows. Catalyzes the reversible interconversion of serine and glycine with tetrahydrofolate (THF) serving as the one-carbon carrier. This reaction serves as the major source of one-carbon groups required for the biosynthesis of purines, thymidylate, methionine, and other important biomolecules. Also exhibits THF-independent aldolase activity toward beta-hydroxyamino acids, producing glycine and aldehydes, via a retro-aldol mechanism. The sequence is that of Serine hydroxymethyltransferase from Shewanella piezotolerans (strain WP3 / JCM 13877).